The sequence spans 281 residues: Undecaprenyl-diphosphatase 1 (281 aa).

6 consecutive transmembrane segments (helical) span residues 95-115 (WMVI…KDLI), 119-139 (FRNL…FILA), 152-172 (LTMK…IPGV), 195-215 (FSFL…LPDA), 227-247 (LQLL…IAWL), and 256-276 (FAWF…LLGT).

It belongs to the UppP family.

It localises to the cell membrane. It catalyses the reaction di-trans,octa-cis-undecaprenyl diphosphate + H2O = di-trans,octa-cis-undecaprenyl phosphate + phosphate + H(+). Catalyzes the dephosphorylation of undecaprenyl diphosphate (UPP). Confers resistance to bacitracin. This chain is Undecaprenyl-diphosphatase 1, found in Corynebacterium jeikeium (strain K411).